Consider the following 318-residue polypeptide: Nodulation protein D (318 aa).

An HTH lysR-type domain is found at L6–T63. The segment at residues L23–G42 is a DNA-binding region (H-T-H motif).

This sequence belongs to the LysR transcriptional regulatory family.

In terms of biological role, nodD regulates the expression of the nodABCFE genes which encode other nodulation proteins. NodD is also a negative regulator of its own expression. Binds flavonoids as inducers. This Rhizobium leguminosarum bv. trifolii protein is Nodulation protein D (nodD).